A 167-amino-acid polypeptide reads, in one-letter code: MKIRIGFGYDVHPLVMNYNLWLGGIKIPYEKGLKGHSDADVLIHALCDALLGAADIGNIGTNFPNTNKKLRNIDSKILLKQTMSFIYSKNYELNNADITVCIEQPKLNPFIPQMKTCLAEIMQTDKGNISIKATTSEKMGFIGREEGIAVFATVLITPINEIGISCQ.

Positions 10 and 12 each coordinate a divalent metal cation. Residues 10–12 (DVH) and 36–37 (HS) contribute to the 4-CDP-2-C-methyl-D-erythritol 2-phosphate site. Histidine 44 contacts a divalent metal cation. 4-CDP-2-C-methyl-D-erythritol 2-phosphate is bound by residues 58–60 (NIG), 63–67 (FPNTN), 134–137 (TTSE), phenylalanine 141, and arginine 144.

The protein belongs to the IspF family. Homotrimer. A divalent metal cation is required as a cofactor.

It carries out the reaction 4-CDP-2-C-methyl-D-erythritol 2-phosphate = 2-C-methyl-D-erythritol 2,4-cyclic diphosphate + CMP. It functions in the pathway isoprenoid biosynthesis; isopentenyl diphosphate biosynthesis via DXP pathway; isopentenyl diphosphate from 1-deoxy-D-xylulose 5-phosphate: step 4/6. Its function is as follows. Involved in the biosynthesis of isopentenyl diphosphate (IPP) and dimethylallyl diphosphate (DMAPP), two major building blocks of isoprenoid compounds. Catalyzes the conversion of 4-diphosphocytidyl-2-C-methyl-D-erythritol 2-phosphate (CDP-ME2P) to 2-C-methyl-D-erythritol 2,4-cyclodiphosphate (ME-CPP) with a corresponding release of cytidine 5-monophosphate (CMP). This chain is 2-C-methyl-D-erythritol 2,4-cyclodiphosphate synthase, found in Azobacteroides pseudotrichonymphae genomovar. CFP2.